Consider the following 253-residue polypeptide: uncharacterized protein (253 aa).

An N-terminal signal peptide occupies residues 1 to 19 (MRYLKRITIYISLLILVSG). Cys-20 is lipidated: N-palmitoyl cysteine. Residue Cys-20 is the site of S-diacylglycerol cysteine attachment.

Belongs to the staphylococcal tandem lipoprotein family.

It is found in the cell membrane. This is an uncharacterized protein from Staphylococcus epidermidis (strain ATCC 12228 / FDA PCI 1200).